We begin with the raw amino-acid sequence, 261 residues long: Cytochrome c oxidase subunit 3 (261 aa).

Topologically, residues 1-15 (MTHQTHAYHMVNPSP) are mitochondrial matrix. The helical transmembrane segment at 16 to 34 (WPLTGALSALLMTSGLIMW) threads the bilayer. Residues 35–40 (FHFNST) lie on the Mitochondrial intermembrane side of the membrane. A helical membrane pass occupies residues 41–66 (TLLMLGLTTNMLTMYQWWRDVVREST). The Mitochondrial matrix segment spans residues 67-72 (FQGHHT). The helical transmembrane segment at 73–105 (PNVQKGLRYGMILFIISEVLFFTGFFWAFYHSS) threads the bilayer. Residues 106 to 128 (LAPTPELGGCWPPTGINPLNPLE) are Mitochondrial intermembrane-facing. A helical membrane pass occupies residues 129-152 (VPLLNTSVLLASGVSITWAHHSLM). The Mitochondrial matrix segment spans residues 153–155 (EGN). A helical membrane pass occupies residues 156 to 183 (RNHMLQALFITIALGVYFTLLQASEYYE). Over 184–190 (APFTISD) the chain is Mitochondrial intermembrane. Residues 191 to 223 (GVYGSTFFVATGFHGLHVIIGSTFLIVCFFRQL) form a helical membrane-spanning segment. The Mitochondrial matrix portion of the chain corresponds to 224 to 232 (KFHFTSNHH). Residues 233–256 (FGFEAAAWYWHFVDVVWLFLYVSI) traverse the membrane as a helical segment. The Mitochondrial intermembrane portion of the chain corresponds to 257-261 (YWWGS).

The protein belongs to the cytochrome c oxidase subunit 3 family. In terms of assembly, component of the cytochrome c oxidase (complex IV, CIV), a multisubunit enzyme composed of 14 subunits. The complex is composed of a catalytic core of 3 subunits MT-CO1, MT-CO2 and MT-CO3, encoded in the mitochondrial DNA, and 11 supernumerary subunits COX4I, COX5A, COX5B, COX6A, COX6B, COX6C, COX7A, COX7B, COX7C, COX8 and NDUFA4, which are encoded in the nuclear genome. The complex exists as a monomer or a dimer and forms supercomplexes (SCs) in the inner mitochondrial membrane with NADH-ubiquinone oxidoreductase (complex I, CI) and ubiquinol-cytochrome c oxidoreductase (cytochrome b-c1 complex, complex III, CIII), resulting in different assemblies (supercomplex SCI(1)III(2)IV(1) and megacomplex MCI(2)III(2)IV(2)).

The protein localises to the mitochondrion inner membrane. It carries out the reaction 4 Fe(II)-[cytochrome c] + O2 + 8 H(+)(in) = 4 Fe(III)-[cytochrome c] + 2 H2O + 4 H(+)(out). Functionally, component of the cytochrome c oxidase, the last enzyme in the mitochondrial electron transport chain which drives oxidative phosphorylation. The respiratory chain contains 3 multisubunit complexes succinate dehydrogenase (complex II, CII), ubiquinol-cytochrome c oxidoreductase (cytochrome b-c1 complex, complex III, CIII) and cytochrome c oxidase (complex IV, CIV), that cooperate to transfer electrons derived from NADH and succinate to molecular oxygen, creating an electrochemical gradient over the inner membrane that drives transmembrane transport and the ATP synthase. Cytochrome c oxidase is the component of the respiratory chain that catalyzes the reduction of oxygen to water. Electrons originating from reduced cytochrome c in the intermembrane space (IMS) are transferred via the dinuclear copper A center (CU(A)) of subunit 2 and heme A of subunit 1 to the active site in subunit 1, a binuclear center (BNC) formed by heme A3 and copper B (CU(B)). The BNC reduces molecular oxygen to 2 water molecules using 4 electrons from cytochrome c in the IMS and 4 protons from the mitochondrial matrix. The sequence is that of Cytochrome c oxidase subunit 3 (MT-CO3) from Gazella leptoceros (Sand gazelle).